Here is a 384-residue protein sequence, read N- to C-terminus: Dual-specificity RNA methyltransferase RlmN (384 aa).

E105 (proton acceptor) is an active-site residue. The Radical SAM core domain maps to 111–350; sequence EDDRATLCVS…TIVRKTRGDD (240 aa). A disulfide bridge connects residues C118 and C355. Residues C125, C129, and C132 each coordinate [4Fe-4S] cluster. S-adenosyl-L-methionine contacts are provided by residues 179–180, S211, 233–235, and N312; these read GE and SLH. Residue C355 is the S-methylcysteine intermediate of the active site.

This sequence belongs to the radical SAM superfamily. RlmN family. [4Fe-4S] cluster is required as a cofactor.

The protein localises to the cytoplasm. It carries out the reaction adenosine(2503) in 23S rRNA + 2 reduced [2Fe-2S]-[ferredoxin] + 2 S-adenosyl-L-methionine = 2-methyladenosine(2503) in 23S rRNA + 5'-deoxyadenosine + L-methionine + 2 oxidized [2Fe-2S]-[ferredoxin] + S-adenosyl-L-homocysteine. The catalysed reaction is adenosine(37) in tRNA + 2 reduced [2Fe-2S]-[ferredoxin] + 2 S-adenosyl-L-methionine = 2-methyladenosine(37) in tRNA + 5'-deoxyadenosine + L-methionine + 2 oxidized [2Fe-2S]-[ferredoxin] + S-adenosyl-L-homocysteine. Specifically methylates position 2 of adenine 2503 in 23S rRNA and position 2 of adenine 37 in tRNAs. m2A2503 modification seems to play a crucial role in the proofreading step occurring at the peptidyl transferase center and thus would serve to optimize ribosomal fidelity. The protein is Dual-specificity RNA methyltransferase RlmN of Shigella boydii serotype 18 (strain CDC 3083-94 / BS512).